A 343-amino-acid polypeptide reads, in one-letter code: Small ribosomal subunit biogenesis GTPase RsgA (343 aa).

Residues 116 to 275 (RGQLKPVAAN…LIDSPGIREF (160 aa)) enclose the CP-type G domain. Residues 163–166 (NKAD) and 217–225 (GQSGVGKSS) contribute to the GTP site. Positions 299, 304, 306, and 312 each coordinate Zn(2+).

This sequence belongs to the TRAFAC class YlqF/YawG GTPase family. RsgA subfamily. As to quaternary structure, monomer. Associates with 30S ribosomal subunit, binds 16S rRNA. The cofactor is Zn(2+).

It localises to the cytoplasm. In terms of biological role, one of several proteins that assist in the late maturation steps of the functional core of the 30S ribosomal subunit. Helps release RbfA from mature subunits. May play a role in the assembly of ribosomal proteins into the subunit. Circularly permuted GTPase that catalyzes slow GTP hydrolysis, GTPase activity is stimulated by the 30S ribosomal subunit. This chain is Small ribosomal subunit biogenesis GTPase RsgA, found in Pseudomonas syringae pv. syringae (strain B728a).